Reading from the N-terminus, the 220-residue chain is ATP-dependent Clp protease proteolytic subunit (220 aa).

Ser-125 serves as the catalytic Nucleophile. His-150 is an active-site residue.

The protein belongs to the peptidase S14 family. As to quaternary structure, fourteen ClpP subunits assemble into 2 heptameric rings which stack back to back to give a disk-like structure with a central cavity, resembling the structure of eukaryotic proteasomes.

Its subcellular location is the cytoplasm. It carries out the reaction Hydrolysis of proteins to small peptides in the presence of ATP and magnesium. alpha-casein is the usual test substrate. In the absence of ATP, only oligopeptides shorter than five residues are hydrolyzed (such as succinyl-Leu-Tyr-|-NHMec, and Leu-Tyr-Leu-|-Tyr-Trp, in which cleavage of the -Tyr-|-Leu- and -Tyr-|-Trp bonds also occurs).. Functionally, cleaves peptides in various proteins in a process that requires ATP hydrolysis. Has a chymotrypsin-like activity. Plays a major role in the degradation of misfolded proteins. The sequence is that of ATP-dependent Clp protease proteolytic subunit from Bacteroides thetaiotaomicron (strain ATCC 29148 / DSM 2079 / JCM 5827 / CCUG 10774 / NCTC 10582 / VPI-5482 / E50).